The primary structure comprises 523 residues: Glycine betaine transporter 1 (523 aa).

12 helical membrane passes run 33 to 53 (VFGI…VLDA), 71 to 91 (FDWL…ALIV), 109 to 129 (SFMS…LMFW), 165 to 185 (FHWG…LAFF), 214 to 234 (IVDI…LGLG), 251 to 271 (GLGL…VSVV), 286 to 306 (MVVA…ASLG), 337 to 357 (WTVF…MFIA), 372 to 392 (VLIV…GLAI), 420 to 440 (VLPF…VFFI), 467 to 487 (VFWA…GGSE), and 496 to 516 (AIST…SLLM).

This sequence belongs to the BCCT transporter (TC 2.A.15) family.

It localises to the cell inner membrane. In terms of biological role, involved in the uptake of the osmoprotectant glycine betaine. The protein is Glycine betaine transporter 1 of Vibrio parahaemolyticus serotype O3:K6 (strain RIMD 2210633).